The following is a 487-amino-acid chain: uncharacterized protein (487 aa).

The N-terminal stretch at 1–31 (MRFHRQGISAIIGVLLIVLLGFCWKLSGSYG) is a signal peptide. Residues Asn40, Asn68, Asn150, Asn220, Asn304, Asn367, Asn442, and Asn448 are each glycosylated (N-linked (GlcNAc...) asparagine). Residues 141–176 (LERRHGRFGNGTNGDHPKGPPPPPPPPDEKGRGSQK) are disordered.

N-glycosylated.

This is an uncharacterized protein from Saccharomyces cerevisiae (strain ATCC 204508 / S288c) (Baker's yeast).